Here is a 248-residue protein sequence, read N- to C-terminus: Coproheme decarboxylase (248 aa).

Residues Arg130, 144–148 (YPMDK), His171, Gln184, and Ser222 each bind Fe-coproporphyrin III. Residue Tyr144 is part of the active site.

Belongs to the ChdC family. Type 1 subfamily. Fe-coproporphyrin III serves as cofactor.

It carries out the reaction Fe-coproporphyrin III + 2 H2O2 + 2 H(+) = heme b + 2 CO2 + 4 H2O. The catalysed reaction is Fe-coproporphyrin III + H2O2 + H(+) = harderoheme III + CO2 + 2 H2O. It catalyses the reaction harderoheme III + H2O2 + H(+) = heme b + CO2 + 2 H2O. The protein operates within porphyrin-containing compound metabolism; protoheme biosynthesis. In terms of biological role, involved in coproporphyrin-dependent heme b biosynthesis. Catalyzes the decarboxylation of Fe-coproporphyrin III (coproheme) to heme b (protoheme IX), the last step of the pathway. The reaction occurs in a stepwise manner with a three-propionate intermediate. The polypeptide is Coproheme decarboxylase (Geobacillus thermodenitrificans (strain NG80-2)).